A 133-amino-acid chain; its full sequence is ATP synthase epsilon chain (133 aa).

It belongs to the ATPase epsilon chain family. As to quaternary structure, F-type ATPases have 2 components, CF(1) - the catalytic core - and CF(0) - the membrane proton channel. CF(1) has five subunits: alpha(3), beta(3), gamma(1), delta(1), epsilon(1). CF(0) has three main subunits: a, b and c.

The protein resides in the cell membrane. Produces ATP from ADP in the presence of a proton gradient across the membrane. The chain is ATP synthase epsilon chain from Staphylococcus haemolyticus (strain JCSC1435).